Consider the following 176-residue polypeptide: Corrinoid adenosyltransferase (176 aa).

ATP is bound by residues 6-14, K24, 131-136, and N155; these read TRTGDNGTT and RRLERI.

Belongs to the Cob(I)alamin adenosyltransferase family.

It localises to the cytoplasm. The enzyme catalyses 2 cob(II)yrinate a,c diamide + reduced [electron-transfer flavoprotein] + 2 ATP = 2 adenosylcob(III)yrinate a,c-diamide + 2 triphosphate + oxidized [electron-transfer flavoprotein] + 3 H(+). It carries out the reaction 2 cob(II)alamin + reduced [electron-transfer flavoprotein] + 2 ATP = 2 adenosylcob(III)alamin + 2 triphosphate + oxidized [electron-transfer flavoprotein] + 3 H(+). Its pathway is cofactor biosynthesis; adenosylcobalamin biosynthesis; adenosylcobalamin from cob(II)yrinate a,c-diamide: step 2/7. The protein is Corrinoid adenosyltransferase of Citrobacter freundii.